A 335-amino-acid polypeptide reads, in one-letter code: Heat-inducible transcription repressor HrcA (335 aa).

Belongs to the HrcA family.

Negative regulator of class I heat shock genes (grpE-dnaK-dnaJ and groELS operons). Prevents heat-shock induction of these operons. The protein is Heat-inducible transcription repressor HrcA of Mesomycoplasma hyopneumoniae (strain 232) (Mycoplasma hyopneumoniae).